A 174-amino-acid polypeptide reads, in one-letter code: ATP-dependent protease subunit HslV (174 aa).

Residue T2 is part of the active site. Na(+)-binding residues include G157, C160, and T163.

This sequence belongs to the peptidase T1B family. HslV subfamily. In terms of assembly, a double ring-shaped homohexamer of HslV is capped on each side by a ring-shaped HslU homohexamer. The assembly of the HslU/HslV complex is dependent on binding of ATP.

Its subcellular location is the cytoplasm. The enzyme catalyses ATP-dependent cleavage of peptide bonds with broad specificity.. With respect to regulation, allosterically activated by HslU binding. Functionally, protease subunit of a proteasome-like degradation complex believed to be a general protein degrading machinery. The sequence is that of ATP-dependent protease subunit HslV from Shewanella denitrificans (strain OS217 / ATCC BAA-1090 / DSM 15013).